We begin with the raw amino-acid sequence, 427 residues long: MPALVLIGAQWGDEGKGKATDLLGGAVDYVVRYQGGNNAGHTVVIGAESYALHLIPSGMLRADCVPVIGNGVVIDPGVLLAEMDGLTARGIDVSRLLISANAHLIMPHHRALDRVIERYLGKARIGTTGRGIGPTYGDKVARTGIRVQDLLDPGIFHKKLELVLREKNQVLAKVYNRRRIELDEVVEEYADYAKRLQPHIADTGLILDRALRAGKVVLLEGSQGTLLDVDHGTYPFVTSSNPTAGYAATGAGIGPTRISRVIGIIKAYTTRVGAGPFPTELDDKVGEELRRIGGEFGVTTGRARRTGWFDAVIARYAVRVNGLTDLFLTKLDVLSGFDRVPICVGYDLGGERVDEMPMTQTEFHHAKPIYTDLPGWHEDISDVRSFADLPGAAKDYIRALEEFSGAPVSAVGVGPGRDQTLVINDLV.

Residues 12 to 18 and 40 to 42 each bind GTP; these read GDEGKGK and GHT. Residue D13 is the Proton acceptor of the active site. Mg(2+)-binding residues include D13 and G40. Residues 13–16, 38–41, T128, R142, Q223, T238, and R302 each bind IMP; these read DEGK and NAGH. H41 functions as the Proton donor in the catalytic mechanism. 298–304 contacts substrate; it reads VTTGRAR. Residues R304, 330–332, and 412–414 contribute to the GTP site; these read KLD and GVG.

It belongs to the adenylosuccinate synthetase family. Homodimer. The cofactor is Mg(2+).

It is found in the cytoplasm. It carries out the reaction IMP + L-aspartate + GTP = N(6)-(1,2-dicarboxyethyl)-AMP + GDP + phosphate + 2 H(+). It participates in purine metabolism; AMP biosynthesis via de novo pathway; AMP from IMP: step 1/2. Plays an important role in the de novo pathway of purine nucleotide biosynthesis. Catalyzes the first committed step in the biosynthesis of AMP from IMP. The protein is Adenylosuccinate synthetase of Frankia casuarinae (strain DSM 45818 / CECT 9043 / HFP020203 / CcI3).